A 522-amino-acid chain; its full sequence is Zinc finger protein STOP1 homolog (522 aa).

Composition is skewed to polar residues over residues 1–12 and 19–40; these read MDSGLGRSSETS and MASNATRNTDPDQQGVRFSSMD. Disordered stretches follow at residues 1-43 and 234-260; these read MDSG…DQPP and CGGEGSEPIPMEDHDVKESDDGGEREN. The segment covering 244–260 has biased composition (basic and acidic residues); it reads MEDHDVKESDDGGEREN. The C2H2-type 1 zinc-finger motif lies at 282 to 304; sequence HFCLICGKGFKRDANLRMHMRGH. The C2H2-type 2; atypical zinc-finger motif lies at 390 to 421; it reads KHCGRDKWLCSCGTTFSRKDKLFGHVALFQGH.

It localises to the nucleus. In terms of biological role, probable transcription factor that may be involved in aluminum tolerance. The polypeptide is Zinc finger protein STOP1 homolog (Oryza sativa subsp. japonica (Rice)).